The following is a 517-amino-acid chain: C-22 sterol desaturase ERG5 (517 aa).

Residues 21-41 (LAVAKATGSPITTLFTIIFLI) form a helical membrane-spanning segment. C458 lines the heme pocket.

The protein belongs to the cytochrome P450 family. It depends on heme as a cofactor.

It localises to the endoplasmic reticulum membrane. The enzyme catalyses 5-dehydroepisterol + NADPH + O2 + H(+) = ergosta-5,7,22,24(28)-tetraen-3beta-ol + NADP(+) + 2 H2O. The protein operates within steroid metabolism; ergosterol biosynthesis; ergosterol from zymosterol: step 4/5. In terms of biological role, C-22 sterol desaturase; part of the third module of ergosterol biosynthesis pathway that includes the late steps of the pathway. ERG5 converts 5-dehydroepisterol into ergosta-5,7,22,24(28)-tetraen-3beta-ol by forming the C-22(23) double bond in the sterol side chain. The third module or late pathway involves the ergosterol synthesis itself through consecutive reactions that mainly occur in the endoplasmic reticulum (ER) membrane. Firstly, the squalene synthase ERG9 catalyzes the condensation of 2 farnesyl pyrophosphate moieties to form squalene, which is the precursor of all steroids. Squalene synthase is crucial for balancing the incorporation of farnesyl diphosphate (FPP) into sterol and nonsterol isoprene synthesis. Secondly, the squalene epoxidase ERG1 catalyzes the stereospecific oxidation of squalene to (S)-2,3-epoxysqualene, which is considered to be a rate-limiting enzyme in steroid biosynthesis. Then, the lanosterol synthase ERG7 catalyzes the cyclization of (S)-2,3 oxidosqualene to lanosterol, a reaction that forms the sterol core. In the next steps, lanosterol is transformed to zymosterol through a complex process involving various demethylation, reduction and desaturation reactions. The lanosterol 14-alpha-demethylase ERG11 (also known as CYP51) catalyzes C14-demethylation of lanosterol to produce 4,4'-dimethyl cholesta-8,14,24-triene-3-beta-ol, which is critical for ergosterol biosynthesis. The C-14 reductase ERG24 reduces the C14=C15 double bond of 4,4-dimethyl-cholesta-8,14,24-trienol to produce 4,4-dimethyl-cholesta-8,24-dienol. 4,4-dimethyl-cholesta-8,24-dienol is substrate of the C-4 demethylation complex ERG25-ERG26-ERG27 in which ERG25 catalyzes the three-step monooxygenation required for the demethylation of 4,4-dimethyl and 4alpha-methylsterols, ERG26 catalyzes the oxidative decarboxylation that results in a reduction of the 3-beta-hydroxy group at the C-3 carbon to an oxo group, and ERG27 is responsible for the reduction of the keto group on the C-3. ERG28 has a role as a scaffold to help anchor ERG25, ERG26 and ERG27 to the endoplasmic reticulum and ERG29 regulates the activity of the iron-containing C4-methylsterol oxidase ERG25. Then, the sterol 24-C-methyltransferase ERG6 catalyzes the methyl transfer from S-adenosyl-methionine to the C-24 of zymosterol to form fecosterol. The C-8 sterol isomerase ERG2 catalyzes the reaction which results in unsaturation at C-7 in the B ring of sterols and thus converts fecosterol to episterol. The sterol-C5-desaturase ERG3 then catalyzes the introduction of a C-5 double bond in the B ring to produce 5-dehydroepisterol. The C-22 sterol desaturase ERG5 further converts 5-dehydroepisterol into ergosta-5,7,22,24(28)-tetraen-3beta-ol by forming the C-22(23) double bond in the sterol side chain. Finally, ergosta-5,7,22,24(28)-tetraen-3beta-ol is substrate of the C-24(28) sterol reductase ERG4 to produce ergosterol. This is C-22 sterol desaturase ERG5 from Candida albicans (strain SC5314 / ATCC MYA-2876) (Yeast).